The sequence spans 146 residues: Hemoglobin cathodic subunit beta (146 aa).

The 145-residue stretch at Gln-2–Phe-146 folds into the Globin domain. Heme b-binding residues include His-63 and His-92.

This sequence belongs to the globin family. As to quaternary structure, heterotetramer of two alpha chains and two beta chains. Red blood cells.

Functionally, involved in oxygen transport from the gills to the various peripheral tissues. In Conger conger (Conger eel), this protein is Hemoglobin cathodic subunit beta.